The chain runs to 97 residues: MEFKHVLMILGVIILILAPLIMYSGLGEDEGYFGGADGAAGDLIMEISPNYEPWFEPFWEPPSGEIESLLFALQAAIGAIIIGYFFGYNKAKYEDKN.

The next 2 membrane-spanning stretches (helical) occupy residues 6–26 (VLMI…YSGL) and 68–88 (SLLF…FFGY).

The protein belongs to the CbiN family. In terms of assembly, forms an energy-coupling factor (ECF) transporter complex composed of an ATP-binding protein (A component, CbiO), a transmembrane protein (T component, CbiQ) and 2 possible substrate-capture proteins (S components, CbiM and CbiN) of unknown stoichimetry.

Its subcellular location is the cell membrane. It participates in cofactor biosynthesis; adenosylcobalamin biosynthesis. In terms of biological role, part of the energy-coupling factor (ECF) transporter complex CbiMNOQ involved in cobalt import. This is Cobalt transport protein CbiN from Methanococcus maripaludis (strain C5 / ATCC BAA-1333).